The chain runs to 369 residues: Putative glutamate--cysteine ligase 2-1 (369 aa).

Belongs to the glutamate--cysteine ligase type 2 family. YbdK subfamily.

The enzyme catalyses L-cysteine + L-glutamate + ATP = gamma-L-glutamyl-L-cysteine + ADP + phosphate + H(+). Functionally, ATP-dependent carboxylate-amine ligase which exhibits weak glutamate--cysteine ligase activity. In Rhodococcus jostii (strain RHA1), this protein is Putative glutamate--cysteine ligase 2-1.